We begin with the raw amino-acid sequence, 30 residues long: Hainantoxin F6-34.84 (30 aa).

Intrachain disulfides connect C2/C15 and C9/C24.

This sequence belongs to the AVIT (prokineticin) family. Expressed by the venom gland.

The protein localises to the secreted. In Cyriopagopus hainanus (Chinese bird spider), this protein is Hainantoxin F6-34.84.